We begin with the raw amino-acid sequence, 387 residues long: 3-ketoacyl-CoA thiolase (387 aa).

The active-site Acyl-thioester intermediate is the C91. Active-site proton acceptor residues include H343 and C373.

This sequence belongs to the thiolase-like superfamily. Thiolase family. As to quaternary structure, heterotetramer of two alpha chains (FadB) and two beta chains (FadA).

The protein resides in the cytoplasm. The catalysed reaction is an acyl-CoA + acetyl-CoA = a 3-oxoacyl-CoA + CoA. Its pathway is lipid metabolism; fatty acid beta-oxidation. In terms of biological role, catalyzes the final step of fatty acid oxidation in which acetyl-CoA is released and the CoA ester of a fatty acid two carbons shorter is formed. In Shewanella frigidimarina (strain NCIMB 400), this protein is 3-ketoacyl-CoA thiolase.